A 363-amino-acid chain; its full sequence is Peptide chain release factor 1 (363 aa).

The residue at position 236 (Gln236) is an N5-methylglutamine. The interval Lys286 to Ser305 is disordered.

It belongs to the prokaryotic/mitochondrial release factor family. Methylated by PrmC. Methylation increases the termination efficiency of RF1.

Its subcellular location is the cytoplasm. Peptide chain release factor 1 directs the termination of translation in response to the peptide chain termination codons UAG and UAA. This chain is Peptide chain release factor 1, found in Wolbachia pipientis subsp. Culex pipiens (strain wPip).